A 419-amino-acid chain; its full sequence is tRNA modification GTPase MnmE (419 aa).

(6S)-5-formyl-5,6,7,8-tetrahydrofolate contacts are provided by Arg-2, Glu-59, and Arg-99. Residues 197 to 343 form the TrmE-type G domain; sequence GLSVVIAGPP…LHTMIVEMAR (147 aa). Asn-207 lines the K(+) pocket. GTP-binding positions include 207 to 212, 226 to 232, and 251 to 254; these read NAGKST, SPVAGTT, and DTAG. Ser-211 is a Mg(2+) binding site. K(+) is bound by residues Ser-226, Val-228, and Thr-231. Mg(2+) is bound at residue Thr-232. Lys-419 provides a ligand contact to (6S)-5-formyl-5,6,7,8-tetrahydrofolate.

The protein belongs to the TRAFAC class TrmE-Era-EngA-EngB-Septin-like GTPase superfamily. TrmE GTPase family. As to quaternary structure, homodimer. Heterotetramer of two MnmE and two MnmG subunits. It depends on K(+) as a cofactor.

It localises to the cytoplasm. Functionally, exhibits a very high intrinsic GTPase hydrolysis rate. Involved in the addition of a carboxymethylaminomethyl (cmnm) group at the wobble position (U34) of certain tRNAs, forming tRNA-cmnm(5)s(2)U34. This chain is tRNA modification GTPase MnmE, found in Sphingopyxis alaskensis (strain DSM 13593 / LMG 18877 / RB2256) (Sphingomonas alaskensis).